The chain runs to 79 residues: Acyl carrier protein (79 aa).

One can recognise a Carrier domain in the interval 2–77; it reads SDIEERVKKI…SAIDYVNAHK (76 aa). Ser-37 is subject to O-(pantetheine 4'-phosphoryl)serine.

Belongs to the acyl carrier protein (ACP) family. 4'-phosphopantetheine is transferred from CoA to a specific serine of apo-ACP by AcpS. This modification is essential for activity because fatty acids are bound in thioester linkage to the sulfhydryl of the prosthetic group.

The protein localises to the cytoplasm. It participates in lipid metabolism; fatty acid biosynthesis. Carrier of the growing fatty acid chain in fatty acid biosynthesis. The chain is Acyl carrier protein from Pseudoalteromonas atlantica (strain T6c / ATCC BAA-1087).